The following is a 140-amino-acid chain: Large ribosomal subunit protein uL14 (140 aa).

It belongs to the universal ribosomal protein uL14 family.

This is Large ribosomal subunit protein uL14 (RPL23) from Brugia malayi (Filarial nematode worm).